Consider the following 510-residue polypeptide: NAD(P)H-quinone oxidoreductase subunit 2 B, chloroplastic (510 aa).

Transmembrane regions (helical) follow at residues 24–44 (LLLF…GLIL), 57–77 (IPWL…ALLF), 99–119 (IFQF…VEYI), 124–144 (MAIT…MFLC), 183–203 (YLLM…WLYG), 227–247 (PGIS…LSPA), 295–315 (WHLL…LIAI), 323–343 (MLAY…IVGD), 347–367 (GYAS…GTFA), 395–415 (ALSS…AGFF), 418–438 (LHLF…IGLL), and 484–504 (MIVC…IIAI).

The protein belongs to the complex I subunit 2 family. As to quaternary structure, NDH is composed of at least 16 different subunits, 5 of which are encoded in the nucleus.

The protein localises to the plastid. Its subcellular location is the chloroplast thylakoid membrane. It carries out the reaction a plastoquinone + NADH + (n+1) H(+)(in) = a plastoquinol + NAD(+) + n H(+)(out). It catalyses the reaction a plastoquinone + NADPH + (n+1) H(+)(in) = a plastoquinol + NADP(+) + n H(+)(out). Its function is as follows. NDH shuttles electrons from NAD(P)H:plastoquinone, via FMN and iron-sulfur (Fe-S) centers, to quinones in the photosynthetic chain and possibly in a chloroplast respiratory chain. The immediate electron acceptor for the enzyme in this species is believed to be plastoquinone. Couples the redox reaction to proton translocation, and thus conserves the redox energy in a proton gradient. The polypeptide is NAD(P)H-quinone oxidoreductase subunit 2 B, chloroplastic (Calycanthus floridus var. glaucus (Eastern sweetshrub)).